A 262-amino-acid chain; its full sequence is Large ribosomal subunit protein bL9m (262 aa).

The transit peptide at 1 to 49 directs the protein to the mitochondrion; sequence MAASMAPRCSSLLWAGAAWLRQRGIGELLQPRIERSTPGRDFSLSHYQS.

Belongs to the bacterial ribosomal protein bL9 family. As to quaternary structure, component of the mitochondrial ribosome large subunit (39S) which comprises a 16S rRNA and about 50 distinct proteins.

The protein resides in the mitochondrion. The polypeptide is Large ribosomal subunit protein bL9m (Mrpl9) (Rattus norvegicus (Rat)).